The chain runs to 597 residues: Hydrogenase-1 large chain (597 aa).

Residues Cys76, Cys79, Cys576, and Cys579 each contribute to the Ni(2+) site.

This sequence belongs to the [NiFe]/[NiFeSe] hydrogenase large subunit family. As to quaternary structure, heterodimer of a large and a small subunit. Requires Ni(2+) as cofactor.

The protein resides in the cell membrane. The enzyme catalyses H2 + A = AH2. This Citrobacter freundii protein is Hydrogenase-1 large chain (hyaB).